The primary structure comprises 94 residues: Large ribosomal subunit protein bL25 (94 aa).

Belongs to the bacterial ribosomal protein bL25 family. Part of the 50S ribosomal subunit; part of the 5S rRNA/L5/L18/L25 subcomplex. Contacts the 5S rRNA. Binds to the 5S rRNA independently of L5 and L18.

Functionally, this is one of the proteins that binds to the 5S RNA in the ribosome where it forms part of the central protuberance. This chain is Large ribosomal subunit protein bL25, found in Sodalis glossinidius (strain morsitans).